Reading from the N-terminus, the 766-residue chain is ATP-dependent RNA helicase mak5 (766 aa).

Disordered regions lie at residues 1 to 28 (MGQK…AVED) and 75 to 173 (LRFK…SIKP). Over residues 78–91 (KAAHGKPKKSILKK) the composition is skewed to basic residues. Over residues 95-106 (EEEEPKFDDDEW) the composition is skewed to acidic residues. 2 stretches are compositionally biased toward basic and acidic residues: residues 114-126 (VTEK…KEDQ) and 132-171 (ADKP…DKSI). The Q motif motif lies at 192–220 (SAWESLGLSPEILTSLSKMKFTTPTLVQK). Positions 223-433 (IPQILDGHDV…AGKARWTGGD (211 aa)) constitute a Helicase ATP-binding domain. 236-243 (ASTGSGKT) is a binding site for ATP. The short motif at 360-363 (DEAD) is the DEAD box element. Residues 485–635 (YLYTLLLYNP…KLPLESLELD (151 aa)) enclose the Helicase C-terminal domain. The disordered stretch occupies residues 683–711 (EEFESAQGRGRGRGRGRQERQRKAGEVTK). The span at 698–711 (GRQERQRKAGEVTK) shows a compositional bias: basic and acidic residues.

Belongs to the DEAD box helicase family. DDX24/MAK5 subfamily.

It is found in the nucleus. Its subcellular location is the nucleolus. It catalyses the reaction ATP + H2O = ADP + phosphate + H(+). ATP-binding RNA helicase involved in the biogenesis of 60S ribosomal subunits and is required for the normal formation of 25S and 5.8S rRNAs. This is ATP-dependent RNA helicase mak5 (mak5) from Aspergillus niger (strain ATCC MYA-4892 / CBS 513.88 / FGSC A1513).